The primary structure comprises 233 residues: MAHVCLPLDEPDARGVFKRRLNRFVGVAEIGGADELVHIHDPGRLAELLYPGSVIWARRKKTGKTRYYLTAVELADELVFVDSAKHNKIASWLIESGVLLPGYRVERHEPAYGKGRFDLLLRGPKGEKALVEVKGVTLEVGGRALFPDAPTTRGARHMEELARAAADGFEAHVVFLVLRKKAAVFSPNWEMDRRFAEALARAYKSGVYVHAVKLETSRWCLKYVEKLPIDLQL.

It belongs to the SfsA family.

The sequence is that of Sugar fermentation stimulation protein homolog from Pyrobaculum neutrophilum (strain DSM 2338 / JCM 9278 / NBRC 100436 / V24Sta) (Thermoproteus neutrophilus).